Consider the following 228-residue polypeptide: Probable septum site-determining protein MinC (228 aa).

It belongs to the MinC family. As to quaternary structure, interacts with MinD and FtsZ.

In terms of biological role, cell division inhibitor that blocks the formation of polar Z ring septums. Rapidly oscillates between the poles of the cell to destabilize FtsZ filaments that have formed before they mature into polar Z rings. Prevents FtsZ polymerization. The polypeptide is Probable septum site-determining protein MinC (Bacillus cereus (strain B4264)).